The following is a 192-amino-acid chain: Signal peptidase complex subunit 2 (192 aa).

The Cytoplasmic segment spans residues 1–46 (MEEKKTESTNKNVKKANLLDHHSIKHILDESVSDIVTSRGYKEDVR). Residues 47–69 (LSNLKLILGTIIIVVALVAQFYN) traverse the membrane as a helical segment. Residues 70–78 (KKFPENRDF) lie on the Lumenal side of the membrane. The helical transmembrane segment at 79-98 (LIGCIALYVVLNAVLQLILY) threads the bilayer. Over 99–192 (TKEKNAILFT…YAEEEPKKKK (94 aa)) the chain is Cytoplasmic.

This sequence belongs to the SPCS2 family. As to quaternary structure, component of the signal peptidase complex (SPC) composed of a catalytic subunit SEC11 and three accessory subunits SPCS1, SPCS2 and SPCS3. The complex induces a local thinning of the ER membrane which is used to measure the length of the signal peptide (SP) h-region of protein substrates. This ensures the selectivity of the complex towards h-regions shorter than 18-20 amino acids.

It localises to the endoplasmic reticulum membrane. Its function is as follows. Component of the signal peptidase complex (SPC) which catalyzes the cleavage of N-terminal signal sequences from nascent proteins as they are translocated into the lumen of the endoplasmic reticulum. Enhances the enzymatic activity of SPC and facilitates the interactions between different components of the translocation site. This Arabidopsis thaliana (Mouse-ear cress) protein is Signal peptidase complex subunit 2.